The following is a 238-amino-acid chain: Expansin-like protein 5 (238 aa).

The signal sequence occupies residues 1–21; sequence MRINFKLILIILTSFYGIINC. Residues 45–145 enclose the Expansin-like EG45 domain; it reads NGNCGFGKLT…VKVPCRVSGN (101 aa). 2 disulfides stabilise this stretch: C48–C78 and C81–C140. Residue N89 is glycosylated (N-linked (GlcNAc...) asparagine).

The protein belongs to the expansin family. Expansin A subfamily.

The protein localises to the secreted. In terms of biological role, may serve to lubricate the movement of the cellulose microfibrils during cell growth and wall extension and/or may serve to maintain the fluid state of the slug cell wall. This chain is Expansin-like protein 5 (expl5), found in Dictyostelium discoideum (Social amoeba).